A 617-amino-acid chain; its full sequence is Dihydroxy-acid dehydratase (617 aa).

Asp81 contacts Mg(2+). Cys122 is a [2Fe-2S] cluster binding site. Mg(2+)-binding residues include Asp123 and Lys124. An N6-carboxylysine modification is found at Lys124. Cys197 serves as a coordination point for [2Fe-2S] cluster. A Mg(2+)-binding site is contributed by Glu493. The active-site Proton acceptor is Ser519.

It belongs to the IlvD/Edd family. As to quaternary structure, homodimer. The cofactor is [2Fe-2S] cluster. Requires Mg(2+) as cofactor.

It catalyses the reaction (2R)-2,3-dihydroxy-3-methylbutanoate = 3-methyl-2-oxobutanoate + H2O. The catalysed reaction is (2R,3R)-2,3-dihydroxy-3-methylpentanoate = (S)-3-methyl-2-oxopentanoate + H2O. It functions in the pathway amino-acid biosynthesis; L-isoleucine biosynthesis; L-isoleucine from 2-oxobutanoate: step 3/4. Its pathway is amino-acid biosynthesis; L-valine biosynthesis; L-valine from pyruvate: step 3/4. In terms of biological role, functions in the biosynthesis of branched-chain amino acids. Catalyzes the dehydration of (2R,3R)-2,3-dihydroxy-3-methylpentanoate (2,3-dihydroxy-3-methylvalerate) into 2-oxo-3-methylpentanoate (2-oxo-3-methylvalerate) and of (2R)-2,3-dihydroxy-3-methylbutanoate (2,3-dihydroxyisovalerate) into 2-oxo-3-methylbutanoate (2-oxoisovalerate), the penultimate precursor to L-isoleucine and L-valine, respectively. This is Dihydroxy-acid dehydratase from Corynebacterium aurimucosum (strain ATCC 700975 / DSM 44827 / CIP 107346 / CN-1) (Corynebacterium nigricans).